Here is a 241-residue protein sequence, read N- to C-terminus: MIELGINIDHVATLRQQRHTAYPDPLAAAVRAEDAGADLITLHLREDRRHIQDADVYAIRPRLRTRMNLECALTPEMLEIACAVKPSDVCLVPEKRAELTTEGGLDVLGQFDAVADAVALLTEAGIRVSLFIDPDAAQIEAAARAQAPVIELHTGAYAEAEGELAERELERIRAAVDVGLLHGLRVNAGHGLHYGNVQAVAAIDGISELNIGHAIVAQAVFDGWEKAIRDMKALMIQARAR.

Asparagine 7 contributes to the 3-amino-2-oxopropyl phosphate binding site. 9-10 contributes to the 1-deoxy-D-xylulose 5-phosphate binding site; the sequence is DH. 3-amino-2-oxopropyl phosphate is bound at residue arginine 18. The active-site Proton acceptor is histidine 43. Residues arginine 45 and histidine 50 each coordinate 1-deoxy-D-xylulose 5-phosphate. Glutamate 70 acts as the Proton acceptor in catalysis. Threonine 100 is a binding site for 1-deoxy-D-xylulose 5-phosphate. The Proton donor role is filled by histidine 190. 3-amino-2-oxopropyl phosphate-binding positions include glycine 191 and 212–213; that span reads GH.

The protein belongs to the PNP synthase family. As to quaternary structure, homooctamer; tetramer of dimers.

It is found in the cytoplasm. The catalysed reaction is 3-amino-2-oxopropyl phosphate + 1-deoxy-D-xylulose 5-phosphate = pyridoxine 5'-phosphate + phosphate + 2 H2O + H(+). It participates in cofactor biosynthesis; pyridoxine 5'-phosphate biosynthesis; pyridoxine 5'-phosphate from D-erythrose 4-phosphate: step 5/5. Its function is as follows. Catalyzes the complicated ring closure reaction between the two acyclic compounds 1-deoxy-D-xylulose-5-phosphate (DXP) and 3-amino-2-oxopropyl phosphate (1-amino-acetone-3-phosphate or AAP) to form pyridoxine 5'-phosphate (PNP) and inorganic phosphate. This Bordetella avium (strain 197N) protein is Pyridoxine 5'-phosphate synthase.